The sequence spans 363 residues: MQEDDSVKPFQTVGAHRDLIHCVSFDPHGRRMATCASDMTMAIWDRKPDGNWRRSAHWKCHGGAVWRVIWAHPEFGQIVATCSYDRTIVIWEEQIVRSEKDLKQKESQWIRRTIISDNRSDVTDICFSPRHLGLMMASCNVLGTVRIYEAPDIVDASRWNLIHELQAFHTRCGCVTWSLSRMHRPLIAVGSDEKKAENKKRVVIYENIDGLRKWQRINSLVFDLPCPITDLKFSPISMVDSHQLAVASGDVHVYNIKVARSAILEEDGVENPIQLADYNLIKVALLGDHRKAWRLRYNLMGSVISSTSLDGTLRSWKSLFVNQWVKLSEMNVDDYVPSPEEVRAFISSKTTERLPSQLEKTYF.

WD repeat units follow at residues alanine 15–arginine 54, cysteine 60–aspartate 101, glutamine 108–glutamate 149, arginine 158–glutamate 206, aspartate 223–leucine 264, and glycine 287–lysine 326.

This sequence belongs to the WD repeat SEC13 family. Component of the nuclear pore complex (NPC). Probably part of the GATOR complex.

The protein resides in the nucleus. It is found in the nuclear pore complex. Its subcellular location is the lysosome membrane. It localises to the nucleus envelope. In terms of biological role, probable component of the nuclear pore complex (NPC) which is involved in the trafficking of macromolecules between the cytoplasm and nucleus. Functionally, as a component of the GATOR complex may function in the amino acid-sensing branch of the TORC1 signaling pathway. This chain is Nucleoporin SEH1, found in Caenorhabditis elegans.